A 621-amino-acid chain; its full sequence is Rab proteins geranylgeranyltransferase component A 2 (621 aa).

Residues 113–171 (VQDTETLQRSSPLEASATPADSLDSASLPKERQSAYSTSYEVPSRHTEESDRELSLPSA) form a disordered region. Positions 115-125 (DTETLQRSSPL) are enriched in polar residues. Residues 155–166 (PSRHTEESDREL) are compositionally biased toward basic and acidic residues.

This sequence belongs to the Rab GDI family. In terms of assembly, monomer. Heterotrimer composed of RABGGTA, RABGGTB and CHML; within this trimer, RABGGTA and RABGGTB form the catalytic component B, while CHML (component A) mediates Rab protein binding. Interacts with RAB1A, RAB7A and RAB27A, but has much lower affinity for RAB1A, RAB7A and RAB27A than CHM. Interacts with the non-phosphorylated forms of RAB3A, RAB3B, RAB3C, RAB3D, RAB5B, RAB5C, RAB8A, RAB8B, RAB10, RAB12, RAB35, and RAB43.

It is found in the cytoplasm. Its subcellular location is the cytosol. Functionally, substrate-binding subunit (component A) of the Rab geranylgeranyltransferase (GGTase) complex. Binds unprenylated Rab proteins and presents the substrate peptide to the catalytic component B. The component A is thought to be regenerated by transferring its prenylated Rab back to the donor membrane. Less effective than CHM in supporting prenylation of Rab3 family. The protein is Rab proteins geranylgeranyltransferase component A 2 (Chml) of Mus musculus (Mouse).